The chain runs to 106 residues: UPF0145 protein CKL_2433 (106 aa).

The protein belongs to the UPF0145 family.

The sequence is that of UPF0145 protein CKL_2433 from Clostridium kluyveri (strain ATCC 8527 / DSM 555 / NBRC 12016 / NCIMB 10680 / K1).